A 156-amino-acid chain; its full sequence is Calglandulin (156 aa).

EF-hand domains lie at 8-43 (EQITEYKGIFEMFDEEGNGLVKTDDLESLMSLVGIN), 44-79 (PTKRDLANMAKDVDKDKKGTFNCDGFLALMGIYHEK), 82-117 (NQDEELRAAFKVFDKEHKGYIEWDTLKYVLMNAGEP), and 118-153 (LNEQEAELMMKEADKDGDGTIDYEEFVAMMTGESFK). 5 residues coordinate Ca(2+): D131, D133, D135, T137, and E142.

The protein belongs to the calmodulin family. Calglandulin subfamily. As to expression, expressed by the venom gland.

Its subcellular location is the cytoplasm. Functionally, may be involved in the cellular control mechanism of the secretion of toxins from the gland into the venom. The polypeptide is Calglandulin (Bothrops insularis (Golden lancehead)).